The primary structure comprises 258 residues: Membrane-associated protein Vipp1 (258 aa).

A disordered region spans residues 217–258; sequence MLPPATPVTQAQLPPQQETTPAKSNEVVDAELDSLRKQLDQL. Polar residues predominate over residues 223-239; sequence PVTQAQLPPQQETTPAK. Residues 249 to 258 show a composition bias toward basic and acidic residues; that stretch reads DSLRKQLDQL.

Belongs to the PspA/Vipp/IM30 family. In terms of assembly, polymerizes to form rings, filaments and ribbons. Rings are formed by stacked rungs that tilt to give a dome-shaped curvature. Rings form with symmetries ranging from C11 (55 subunits) to C17 (119 subunits).

It is found in the cell inner membrane. Its function is as follows. A membrane remodeling protein capable of forming rings and/or filaments on membranes, which then curve and tubulate the bilayer. Rings will form on liposomes, altering their positive curvature so the lipid bilayer is remodeled into a negative curve as the membrane enters the ring. Ring stacks of varying lengths can be seen joining isolated liposomes. A lipid monolayer can be drawn into the center of the rings. Required for thylakoid formation. The polypeptide is Membrane-associated protein Vipp1 (Nostoc punctiforme (strain ATCC 29133 / PCC 73102)).